A 348-amino-acid polypeptide reads, in one-letter code: D-alanine--D-alanine ligase (348 aa).

The ATP-grasp domain maps to 132–334 (KRVLESIGIP…YPDLIEELVT (203 aa)). An ATP-binding site is contributed by 162–217 (LARLTFPIFVKPANMGSSVGISKAQTKVELRKAIQLALTYDSRVLIEQGVVAREIE). 3 residues coordinate Mg(2+): Asp288, Glu301, and Asn303.

Belongs to the D-alanine--D-alanine ligase family. The cofactor is Mg(2+). It depends on Mn(2+) as a cofactor.

The protein resides in the cytoplasm. The enzyme catalyses 2 D-alanine + ATP = D-alanyl-D-alanine + ADP + phosphate + H(+). It functions in the pathway cell wall biogenesis; peptidoglycan biosynthesis. In terms of biological role, cell wall formation. The polypeptide is D-alanine--D-alanine ligase (Streptococcus pyogenes serotype M6 (strain ATCC BAA-946 / MGAS10394)).